Consider the following 292-residue polypeptide: MFEIIFIGVGGGAPNKRGLPGILIRREGFEILLDCGEGTQNKMIEHSISFMKLNLIGISHLHGDHVLGLPGIIQTMAMYSRQQKLLLMGPTTLQDYLKSSSKHTYFKPGFETEFIQSYEDQNLTITTFRTCHTIESYGFLIKEKDKTKVDAERLKKEGITDWRIIRKLKEGKRVEIDTKVFLPEDYLYVKKGLSIAYTGDTAPCDSVLNAIKGVDLLIHDSTFLNEREAHDYGHSNCTDAAEIASKADVKRLALYHISGRYQTTEPLLKEAKKIFERTFLPEPLSYFILQEE.

Zn(2+) is bound by residues H60, H62, D64, H65, H132, D200, and H256. The active-site Proton acceptor is the D64.

Belongs to the RNase Z family. As to quaternary structure, homodimer. It depends on Zn(2+) as a cofactor.

It catalyses the reaction Endonucleolytic cleavage of RNA, removing extra 3' nucleotides from tRNA precursor, generating 3' termini of tRNAs. A 3'-hydroxy group is left at the tRNA terminus and a 5'-phosphoryl group is left at the trailer molecule.. Its function is as follows. Zinc phosphodiesterase, which displays some tRNA 3'-processing endonuclease activity. Probably involved in tRNA maturation, by removing a 3'-trailer from precursor tRNA. The polypeptide is Ribonuclease Z (Sulfolobus acidocaldarius (strain ATCC 33909 / DSM 639 / JCM 8929 / NBRC 15157 / NCIMB 11770)).